The chain runs to 417 residues: Signal recognition particle receptor FtsY (417 aa).

GTP-binding positions include 228–235, 310–314, and 368–371; these read GINGTGKT, DTAGR, and TKID.

Belongs to the GTP-binding SRP family. FtsY subfamily. In terms of assembly, part of the signal recognition particle protein translocation system, which is composed of SRP and FtsY.

The protein localises to the cell membrane. It is found in the cytoplasm. The catalysed reaction is GTP + H2O = GDP + phosphate + H(+). Involved in targeting and insertion of nascent membrane proteins into the cytoplasmic membrane. Acts as a receptor for the complex formed by the signal recognition particle (SRP) and the ribosome-nascent chain (RNC). This chain is Signal recognition particle receptor FtsY, found in Methanosarcina acetivorans (strain ATCC 35395 / DSM 2834 / JCM 12185 / C2A).